A 493-amino-acid chain; its full sequence is Accumulates dyads protein 4 (493 aa).

Interacts with CNM67, SPO21/MPC70 and NUD1.

It is found in the cytoplasm. It localises to the cytoskeleton. The protein localises to the microtubule organizing center. The protein resides in the spindle pole body. Its function is as follows. Involved in the pathway that organizes the shaping and sizing of the prospore membrane (PSM) during sporulation. May be required to stabilize the outer plaque of the spindle pole body (SPB). This chain is Accumulates dyads protein 4 (ADY4), found in Saccharomyces cerevisiae (strain ATCC 204508 / S288c) (Baker's yeast).